A 271-amino-acid polypeptide reads, in one-letter code: Tryptophan synthase alpha chain (271 aa).

Active-site proton acceptor residues include Glu49 and Asp60.

It belongs to the TrpA family. As to quaternary structure, tetramer of two alpha and two beta chains.

It carries out the reaction (1S,2R)-1-C-(indol-3-yl)glycerol 3-phosphate + L-serine = D-glyceraldehyde 3-phosphate + L-tryptophan + H2O. Its pathway is amino-acid biosynthesis; L-tryptophan biosynthesis; L-tryptophan from chorismate: step 5/5. The alpha subunit is responsible for the aldol cleavage of indoleglycerol phosphate to indole and glyceraldehyde 3-phosphate. The sequence is that of Tryptophan synthase alpha chain from Burkholderia pseudomallei (strain 1106a).